A 461-amino-acid chain; its full sequence is Steroidogenic factor 1 (461 aa).

The segment at residues 10–85 (DELCPVCGDK…VGMRLEAVRA (76 aa)) is a DNA-binding region (nuclear receptor). The NR C4-type zinc finger occupies 13–33 (CPVCGDKVSGYHYGLLTCESC). An N6-acetyllysine mark is found at K34, K38, and K72. The NR C4-type zinc-finger motif lies at 49–73 (CTESQSCKIDKTQRKRCPFCRFQKC). The disordered stretch occupies residues 116-158 (NGFKLETGPPVGVPPPPPPPPDYMLPHGLHASEPKGLASGPPA). A Glycyl lysine isopeptide (Lys-Gly) (interchain with G-Cter in SUMO) cross-link involves residue K119. Pro residues predominate over residues 126–138 (VGVPPPPPPPPDY). K194 participates in a covalent cross-link: Glycyl lysine isopeptide (Lys-Gly) (interchain with G-Cter in SUMO). Residue S203 is modified to Phosphoserine; by CDK7. The region spanning 222–459 (GVPELILQLL…NLLIEMLQAK (238 aa)) is the NR LBD domain. The segment at 230–461 (LLQLEPDEDQ…LIEMLQAKQT (232 aa)) is important for dimerization. Residues G341, Y436, and K440 each coordinate a 1,2-diacyl-sn-glycero-3-phosphocholine.

It belongs to the nuclear hormone receptor family. NR5 subfamily. In terms of assembly, binds DNA as a monomer. Part of a complex consisting of SFPQ, NONO and NR5A1. Interacts with NR0B2. Interacts with DGKQ and CDK7. Binds to and activated by HIPK3. Post-translationally, may be regulated by phosphorylation and dephosphorylation. In terms of processing, acetylation stimulates the transcriptional activity. Sumoylation reduces CDK7-mediated phosphorylation on Ser-203. Post-translationally, phosphorylated on Ser-203 by CDK7. This phosphorylation promotes transcriptional activity. In terms of tissue distribution, adrenal, ovary, testis, placenta, adipocyte, and brain.

It localises to the nucleus. Functionally, transcriptional activator. Seems to be essential for sexual differentiation and formation of the primary steroidogenic tissues. Binds to the Ad4 site found in the promoter region of steroidogenic P450 genes such as CYP11A, CYP11B and CYP21B. Also regulates the AMH/Muellerian inhibiting substance gene as well as the AHCH and STAR genes. 5'-YCAAGGYC-3' and 5'-RRAGGTCA-3' are the consensus sequences for the recognition by NR5A1. The SFPQ-NONO-NR5A1 complex binds to the CYP17 promoter and regulates basal and cAMP-dependent transcriptional activity. Binds phospholipids with a phosphatidylinositol (PI) headgroup, in particular PI(3,4)P2 and PI(3,4,5)P3. Activated by the phosphorylation of NR5A1 by HIPK3 leading to increased steroidogenic gene expression upon cAMP signaling pathway stimulation. In Bos taurus (Bovine), this protein is Steroidogenic factor 1 (NR5A1).